We begin with the raw amino-acid sequence, 320 residues long: Ferrochelatase (320 aa).

Fe cation is bound by residues His-194 and Glu-275.

This sequence belongs to the ferrochelatase family.

It is found in the cytoplasm. It carries out the reaction heme b + 2 H(+) = protoporphyrin IX + Fe(2+). It functions in the pathway porphyrin-containing compound metabolism; protoheme biosynthesis; protoheme from protoporphyrin-IX: step 1/1. Catalyzes the ferrous insertion into protoporphyrin IX. The polypeptide is Ferrochelatase (Pectobacterium atrosepticum (strain SCRI 1043 / ATCC BAA-672) (Erwinia carotovora subsp. atroseptica)).